A 157-amino-acid polypeptide reads, in one-letter code: Phosphopantetheine adenylyltransferase (157 aa).

T10 serves as a coordination point for substrate. ATP-binding positions include 10–11 and H18; that span reads TF. Substrate contacts are provided by K42, L74, and R88. ATP-binding positions include 89-91, E99, and 124-130; these read GLR and NAFISSS.

This sequence belongs to the bacterial CoaD family. Homohexamer. Mg(2+) serves as cofactor.

The protein localises to the cytoplasm. It catalyses the reaction (R)-4'-phosphopantetheine + ATP + H(+) = 3'-dephospho-CoA + diphosphate. It participates in cofactor biosynthesis; coenzyme A biosynthesis; CoA from (R)-pantothenate: step 4/5. Its function is as follows. Reversibly transfers an adenylyl group from ATP to 4'-phosphopantetheine, yielding dephospho-CoA (dPCoA) and pyrophosphate. This chain is Phosphopantetheine adenylyltransferase, found in Helicobacter pylori (strain Shi470).